A 502-amino-acid polypeptide reads, in one-letter code: Mannitol 2-dehydrogenase (502 aa).

NAD(+) is bound at residue 37-48 (IVHVGVGGFHRA).

The protein belongs to the mannitol dehydrogenase family. Monomer.

The catalysed reaction is D-mannitol + NAD(+) = D-fructose + NADH + H(+). Functionally, catalyzes the NAD(H)-dependent interconversion of D-fructose and D-mannitol in the mannitol metabolic pathway. The protein is Mannitol 2-dehydrogenase of Aspergillus terreus (strain NIH 2624 / FGSC A1156).